A 483-amino-acid chain; its full sequence is Glutamate--tRNA ligase (483 aa).

Residues 9–19 (PSPTGNLHIGT) carry the 'HIGH' region motif. The 'KMSKS' region signature appears at 250-254 (KLSKR). Lys-253 serves as a coordination point for ATP.

Belongs to the class-I aminoacyl-tRNA synthetase family. Glutamate--tRNA ligase type 1 subfamily. As to quaternary structure, monomer.

It localises to the cytoplasm. The catalysed reaction is tRNA(Glu) + L-glutamate + ATP = L-glutamyl-tRNA(Glu) + AMP + diphosphate. In terms of biological role, catalyzes the attachment of glutamate to tRNA(Glu) in a two-step reaction: glutamate is first activated by ATP to form Glu-AMP and then transferred to the acceptor end of tRNA(Glu). The sequence is that of Glutamate--tRNA ligase from Synechocystis sp. (strain ATCC 27184 / PCC 6803 / Kazusa).